Here is a 283-residue protein sequence, read N- to C-terminus: Pantothenate synthetase (283 aa).

An ATP-binding site is contributed by 26–33 (MGNLHEGH). Histidine 33 acts as the Proton donor in catalysis. Position 57 (glutamine 57) interacts with (R)-pantoate. Glutamine 57 provides a ligand contact to beta-alanine. 144–147 (GKKD) serves as a coordination point for ATP. Glutamine 150 serves as a coordination point for (R)-pantoate. An ATP-binding site is contributed by 181-184 (LSSR).

It belongs to the pantothenate synthetase family. Homodimer.

The protein resides in the cytoplasm. The catalysed reaction is (R)-pantoate + beta-alanine + ATP = (R)-pantothenate + AMP + diphosphate + H(+). Its pathway is cofactor biosynthesis; (R)-pantothenate biosynthesis; (R)-pantothenate from (R)-pantoate and beta-alanine: step 1/1. In terms of biological role, catalyzes the condensation of pantoate with beta-alanine in an ATP-dependent reaction via a pantoyl-adenylate intermediate. This Variovorax paradoxus (strain S110) protein is Pantothenate synthetase.